A 141-amino-acid chain; its full sequence is Putative pre-16S rRNA nuclease (141 aa).

This sequence belongs to the YqgF nuclease family.

The protein resides in the cytoplasm. Its function is as follows. Could be a nuclease involved in processing of the 5'-end of pre-16S rRNA. This is Putative pre-16S rRNA nuclease from Aliivibrio fischeri (strain ATCC 700601 / ES114) (Vibrio fischeri).